Here is a 469-residue protein sequence, read N- to C-terminus: Sorting and assembly machinery component 50 homolog (469 aa).

A POTRA domain is found at 45–125 (VVVQHVHFDG…LDVTFEVTEL (81 aa)). K255 is subject to N6-methyllysine.

The protein belongs to the SAM50/omp85 family. In terms of assembly, associates with the mitochondrial contact site and cristae organizing system (MICOS) complex, composed of at least MICOS10/MIC10, CHCHD3/MIC19, CHCHD6/MIC25, APOOL/MIC27, IMMT/MIC60, APOO/MIC23/MIC26 and QIL1/MIC13. This complex was also known under the names MINOS or MitOS complex. The MICOS complex associates with mitochondrial outer membrane proteins SAMM50, MTX1 and MTX2 (together described as components of the mitochondrial outer membrane sorting assembly machinery (SAM) complex) and DNAJC11, mitochondrial inner membrane protein TMEM11 and with HSPA9. The MICOS and SAM complexes together with DNAJC11 are part of a large protein complex spanning both membranes termed the mitochondrial intermembrane space bridging (MIB) complex. Interacts with IMMT/MIC60. Interacts with CHCHD3/MIC19. Interacts with ARMC1. (Microbial infection) Interacts with parasite T.gondii RH strain MAF1b1; the interaction is probably indirect and results in the disruption of the MIB complex and the formation of SPOTs (structures positive for outer mitochondrial membrane (OMM)), a cellular response to OMM stress, which leads to the constitutive shedding of OMM vesicles.

The protein localises to the mitochondrion outer membrane. It is found in the cytoplasm. The protein resides in the mitochondrion. Its function is as follows. Plays a crucial role in the maintenance of the structure of mitochondrial cristae and the proper assembly of the mitochondrial respiratory chain complexes. Required for the assembly of TOMM40 into the TOM complex. This is Sorting and assembly machinery component 50 homolog (Samm50) from Mus musculus (Mouse).